Consider the following 37-residue polypeptide: Large ribosomal subunit protein bL36c (37 aa).

The protein belongs to the bacterial ribosomal protein bL36 family.

The protein resides in the plastid. The protein is Large ribosomal subunit protein bL36c of Cuscuta reflexa (Southern Asian dodder).